We begin with the raw amino-acid sequence, 216 residues long: Large ribosomal subunit protein uL3 (216 aa).

Positions 137–158 (GASHGAHKNHRKPGSIGGASTP) are disordered.

The protein belongs to the universal ribosomal protein uL3 family. Part of the 50S ribosomal subunit. Forms a cluster with proteins L14 and L19.

One of the primary rRNA binding proteins, it binds directly near the 3'-end of the 23S rRNA, where it nucleates assembly of the 50S subunit. The sequence is that of Large ribosomal subunit protein uL3 from Pseudarthrobacter chlorophenolicus (strain ATCC 700700 / DSM 12829 / CIP 107037 / JCM 12360 / KCTC 9906 / NCIMB 13794 / A6) (Arthrobacter chlorophenolicus).